The following is a 391-amino-acid chain: Elongation factor Tu (391 aa).

Residues 10–201 (KPHVNIGTIG…AVDDYIPTPE (192 aa)) form the tr-type G domain. A G1 region spans residues 19-26 (GHVDHGKT). A GTP-binding site is contributed by 19–26 (GHVDHGKT). Position 26 (Thr26) interacts with Mg(2+). A G2 region spans residues 55–59 (GITIS). A G3 region spans residues 76-79 (DCPG). Residues 76 to 80 (DCPGH) and 131 to 134 (NKVD) contribute to the GTP site. The tract at residues 131–134 (NKVD) is G4. The G5 stretch occupies residues 169–171 (SAL).

This sequence belongs to the TRAFAC class translation factor GTPase superfamily. Classic translation factor GTPase family. EF-Tu/EF-1A subfamily. Monomer.

Its subcellular location is the cytoplasm. The enzyme catalyses GTP + H2O = GDP + phosphate + H(+). In terms of biological role, GTP hydrolase that promotes the GTP-dependent binding of aminoacyl-tRNA to the A-site of ribosomes during protein biosynthesis. The polypeptide is Elongation factor Tu (Paracoccus denitrificans (strain Pd 1222)).